The chain runs to 413 residues: Multidrug resistance protein MdtA (413 aa).

An N-terminal signal peptide occupies residues 1-20 (MKGSNTFRWAIAIGVVVAAA). Disordered regions lie at residues 31-57 (SPTA…RDGP) and 391-413 (EPQT…GARA). Residues 397-413 (ADEKSPSRHEGQKGARA) show a composition bias toward basic and acidic residues.

It belongs to the membrane fusion protein (MFP) (TC 8.A.1) family. Part of a tripartite efflux system composed of MdtA, MdtB and MdtC.

Its subcellular location is the cell inner membrane. The chain is Multidrug resistance protein MdtA from Salmonella typhimurium (strain LT2 / SGSC1412 / ATCC 700720).